Here is a 125-residue protein sequence, read N- to C-terminus: Histone H1-like protein HC1 (125 aa).

Belongs to the histone H1/H5 family. HCT subfamily.

Functionally, might have a role analogous to that of eukaryotic histone proteins. This is Histone H1-like protein HC1 (hctA) from Chlamydia muridarum (strain MoPn / Nigg).